A 411-amino-acid chain; its full sequence is 2,3-bisphosphoglycerate-independent phosphoglycerate mutase (411 aa).

It belongs to the BPG-independent phosphoglycerate mutase family. A-PGAM subfamily.

The catalysed reaction is (2R)-2-phosphoglycerate = (2R)-3-phosphoglycerate. It functions in the pathway carbohydrate degradation; glycolysis; pyruvate from D-glyceraldehyde 3-phosphate: step 3/5. Catalyzes the interconversion of 2-phosphoglycerate and 3-phosphoglycerate. The protein is 2,3-bisphosphoglycerate-independent phosphoglycerate mutase of Pyrobaculum neutrophilum (strain DSM 2338 / JCM 9278 / NBRC 100436 / V24Sta) (Thermoproteus neutrophilus).